The primary structure comprises 290 residues: uncharacterized protein (290 aa).

Its subcellular location is the cytoplasm. This is an uncharacterized protein from Saccharomyces cerevisiae (strain ATCC 204508 / S288c) (Baker's yeast).